The primary structure comprises 105 residues: Protein yippee-like At4g27740 (105 aa).

The 98-residue stretch at 8-105 folds into the Yippee domain; sequence PTYFCRNCEN…IEKLKLTKRY (98 aa). Zn(2+) is bound by residues Cys12, Cys15, Cys68, and Cys71.

The protein belongs to the yippee family.

This chain is Protein yippee-like At4g27740, found in Arabidopsis thaliana (Mouse-ear cress).